Consider the following 241-residue polypeptide: U2 small nuclear ribonucleoprotein B'' (241 aa).

Positions 12-91 constitute an RRM 1 domain; it reads QTLYVNNLYE…RPMKIQYCKS (80 aa). Basic and acidic residues predominate over residues 99 to 126; that stretch reads LDGTYMEKKREREENDKKGSNKKQDRKS. A disordered region spans residues 99–169; sequence LDGTYMEKKR…PRDDPPNKTL (71 aa). A compositionally biased stretch (low complexity) spans 129–152; the sequence is QQQQQQKRPGAPTSTTSTTSPTTS. The region spanning 167 to 241 is the RRM 2 domain; sequence KTLFVENLPD…KPMVVSFAAQ (75 aa).

This sequence belongs to the RRM U1 A/B'' family. In terms of assembly, identified in the spliceosome B complex. Identified in the spliceosome C complex.

The protein resides in the nucleus. Involved in pre-mRNA splicing as component of the spliceosome. Associated with sn-RNP U2, where it contributes to the binding of stem loop IV of U2 snRNA. The chain is U2 small nuclear ribonucleoprotein B'' (snrpb2) from Dictyostelium discoideum (Social amoeba).